A 561-amino-acid chain; its full sequence is Zinc finger protein 394 (561 aa).

Phosphoserine is present on Ser-12. A Glycyl lysine isopeptide (Lys-Gly) (interchain with G-Cter in SUMO2) cross-link involves residue Lys-40. A disordered region spans residues 43 to 62 (EDSLGSWEPSYPAASPDPET). Residues 64–146 (RLHFRQLRYQ…AVVRALQRAL (83 aa)) form the SCAN box domain. One can recognise a KRAB domain in the interval 155 to 230 (VTFEDMAVSL…LQEAFQGKRP (76 aa)). Residues Lys-203 and Lys-228 each participate in a glycyl lysine isopeptide (Lys-Gly) (interchain with G-Cter in SUMO2) cross-link. The segment covering 238-247 (THEDRVEKQS) has biased composition (basic and acidic residues). Residues 238–283 (THEDRVEKQSGDPLPLKLENSPEAEGFNSISDVNKNGSIEGEDSKN) are disordered. Lys-254 participates in a covalent cross-link: Glycyl lysine isopeptide (Lys-Gly) (interchain with G-Cter in SUMO2). The span at 265-274 (NSISDVNKNG) shows a compositional bias: polar residues. Lys-282 is covalently cross-linked (Glycyl lysine isopeptide (Lys-Gly) (interchain with G-Cter in SUMO2)). 7 C2H2-type zinc fingers span residues 358 to 380 (YKCG…QRIH), 386 to 408 (YGCQ…QRTH), 414 to 436 (YTCL…QSTH), 442 to 463 (FKCE…QRLH), 469 to 491 (YKCE…HRIH), 497 to 519 (YGCS…QRIH), and 525 to 547 (YKCL…QRIH). Residue Lys-443 forms a Glycyl lysine isopeptide (Lys-Gly) (interchain with G-Cter in SUMO2) linkage.

Belongs to the krueppel C2H2-type zinc-finger protein family.

It is found in the nucleus. May be involved in transcriptional regulation. In Pan paniscus (Pygmy chimpanzee), this protein is Zinc finger protein 394 (ZNF394).